Here is a 366-residue protein sequence, read N- to C-terminus: 3-dehydroquinate synthase (366 aa).

NAD(+) contacts are provided by residues 74-79, 108-112, 132-133, lysine 144, lysine 153, and 171-174; these read SGEAAK, GVVGD, TT, and FLRT. Residues glutamate 186, histidine 249, and histidine 266 each coordinate Zn(2+).

It belongs to the sugar phosphate cyclases superfamily. Dehydroquinate synthase family. Co(2+) serves as cofactor. The cofactor is Zn(2+). Requires NAD(+) as cofactor.

It localises to the cytoplasm. The enzyme catalyses 7-phospho-2-dehydro-3-deoxy-D-arabino-heptonate = 3-dehydroquinate + phosphate. Its pathway is metabolic intermediate biosynthesis; chorismate biosynthesis; chorismate from D-erythrose 4-phosphate and phosphoenolpyruvate: step 2/7. Catalyzes the conversion of 3-deoxy-D-arabino-heptulosonate 7-phosphate (DAHP) to dehydroquinate (DHQ). The protein is 3-dehydroquinate synthase of Geobacillus thermodenitrificans (strain NG80-2).